The chain runs to 525 residues: Bifunctional purine biosynthesis protein PurH (525 aa).

Residues 1–147 enclose the MGS-like domain; that stretch reads MTKIERALIS…KNWAHVAIVT (147 aa).

Belongs to the PurH family.

It catalyses the reaction (6R)-10-formyltetrahydrofolate + 5-amino-1-(5-phospho-beta-D-ribosyl)imidazole-4-carboxamide = 5-formamido-1-(5-phospho-D-ribosyl)imidazole-4-carboxamide + (6S)-5,6,7,8-tetrahydrofolate. The catalysed reaction is IMP + H2O = 5-formamido-1-(5-phospho-D-ribosyl)imidazole-4-carboxamide. It functions in the pathway purine metabolism; IMP biosynthesis via de novo pathway; 5-formamido-1-(5-phospho-D-ribosyl)imidazole-4-carboxamide from 5-amino-1-(5-phospho-D-ribosyl)imidazole-4-carboxamide (10-formyl THF route): step 1/1. The protein operates within purine metabolism; IMP biosynthesis via de novo pathway; IMP from 5-formamido-1-(5-phospho-D-ribosyl)imidazole-4-carboxamide: step 1/1. The sequence is that of Bifunctional purine biosynthesis protein PurH from Chromobacterium violaceum (strain ATCC 12472 / DSM 30191 / JCM 1249 / CCUG 213 / NBRC 12614 / NCIMB 9131 / NCTC 9757 / MK).